Consider the following 380-residue polypeptide: Chorismate synthase (380 aa).

The NADP(+) site is built by Arg-48 and Arg-53. Residues 126–128, Gly-284, 299–303, and Arg-326 each bind FMN; these read RAS and KPTSS.

This sequence belongs to the chorismate synthase family. The cofactor is FMNH2.

The enzyme catalyses 5-O-(1-carboxyvinyl)-3-phosphoshikimate = chorismate + phosphate. It functions in the pathway metabolic intermediate biosynthesis; chorismate biosynthesis; chorismate from D-erythrose 4-phosphate and phosphoenolpyruvate: step 7/7. Catalyzes the anti-1,4-elimination of the C-3 phosphate and the C-6 proR hydrogen from 5-enolpyruvylshikimate-3-phosphate (EPSP) to yield chorismate, which is the branch point compound that serves as the starting substrate for the three terminal pathways of aromatic amino acid biosynthesis. This reaction introduces a second double bond into the aromatic ring system. The chain is Chorismate synthase from Ignicoccus hospitalis (strain KIN4/I / DSM 18386 / JCM 14125).